Consider the following 430-residue polypeptide: C4-dicarboxylate transport protein (430 aa).

A run of 9 helical transmembrane segments spans residues 8–28 (SLYF…HFYP), 44–64 (LIKM…IAGM), 76–96 (IALL…LVIV), 144–164 (AFAS…GFAL), 184–204 (VIFG…FGAM), 222–242 (LIIC…GSIA), 289–309 (VVGL…SIYL), 326–346 (VIHQ…AAGV), and 352–372 (IVLA…LALI).

It belongs to the dicarboxylate/amino acid:cation symporter (DAACS) (TC 2.A.23) family.

The protein localises to the cell inner membrane. In terms of biological role, responsible for the transport of dicarboxylates such as succinate, fumarate, and malate from the periplasm across the membrane. This Yersinia enterocolitica serotype O:8 / biotype 1B (strain NCTC 13174 / 8081) protein is C4-dicarboxylate transport protein.